The primary structure comprises 179 residues: Large ribosomal subunit protein uL6 (179 aa).

Residues 154–169 (EPYKGKGVKYEHEQIR) show a composition bias toward basic and acidic residues. Residues 154-179 (EPYKGKGVKYEHEQIRRKAGKSGGKK) form a disordered region. Residues 170-179 (RKAGKSGGKK) show a composition bias toward basic residues.

It belongs to the universal ribosomal protein uL6 family. In terms of assembly, part of the 50S ribosomal subunit.

This protein binds to the 23S rRNA, and is important in its secondary structure. It is located near the subunit interface in the base of the L7/L12 stalk, and near the tRNA binding site of the peptidyltransferase center. The sequence is that of Large ribosomal subunit protein uL6 from Oleidesulfovibrio alaskensis (strain ATCC BAA-1058 / DSM 17464 / G20) (Desulfovibrio alaskensis).